The following is a 380-amino-acid chain: MLRAVARCCGHWPPGAAAADGMLWQTELRPHAAGEFSMAAAQANLAMEDQAQVLASPAATLVGVYDGHGGADASRFLRSRLFPHVQRFEKEQGGMSTEVIRRAFGAAEEEFLQQVRQAWRQRPKMAAVGSCCLLGAISGDTLYVANLGDSRAVLGRRVVGGGVAVAERLTDEHNAASEEVRRELTALNPDDAQIVVHARGAWRVKGIIQVSRTIGDVYLKKQEYSMDPVFRNVGPPIPLKRPALSAEPSIQVRKLKPNDLFLIFASDGLWEHLSDDAAVQIVFKNPRTGIANRLVKAALKEATRKREVSFRDLKTIEKGVRRHFHDDISVIVVYLDRHRGRRHTRVVDSSSNCTNAPVDIYSSNSGQSVETLQAHRGSGW.

A PPM-type phosphatase domain is found at 32–335 (AAGEFSMAAA…DDISVIVVYL (304 aa)). Asp66, Gly67, Asp267, and Asp326 together coordinate Mn(2+).

Belongs to the PP2C family. It depends on Mg(2+) as a cofactor. Mn(2+) is required as a cofactor.

It catalyses the reaction O-phospho-L-seryl-[protein] + H2O = L-seryl-[protein] + phosphate. The catalysed reaction is O-phospho-L-threonyl-[protein] + H2O = L-threonyl-[protein] + phosphate. The chain is Probable protein phosphatase 2C 34 (BIPP2C2) from Oryza sativa subsp. indica (Rice).